A 608-amino-acid polypeptide reads, in one-letter code: Kelch-like protein 10 (608 aa).

A BTB domain is found at 39–106; sequence CDVVIKVNGF…AYTRTVPITP (68 aa). Kelch repeat units lie at residues 292–339, 340–386, 388–433, 434–480, 481–527, and 529–574; these read ILFA…YLKG, YVYI…VLGN, IYAM…TLYG, KVYI…AYGE, HVYA…VVDD, and LFVV…VVPG. Ser501 carries the phosphoserine modification.

Self-associates. Interacts with CUL3; indicative for the participation in an E3 ubiquitin ligase complex.

The protein resides in the cytoplasm. It participates in protein modification; protein ubiquitination. Its function is as follows. May be a substrate-specific adapter of a CUL3-based E3 ubiquitin-protein ligase complex which mediates the ubiquitination and subsequent proteasomal degradation of target proteins during spermatogenesis. The polypeptide is Kelch-like protein 10 (KLHL10) (Homo sapiens (Human)).